Here is a 199-residue protein sequence, read N- to C-terminus: UPF0637 protein LVIS_1261 (199 aa).

Belongs to the UPF0637 family.

The chain is UPF0637 protein LVIS_1261 from Levilactobacillus brevis (strain ATCC 367 / BCRC 12310 / CIP 105137 / JCM 1170 / LMG 11437 / NCIMB 947 / NCTC 947) (Lactobacillus brevis).